Consider the following 515-residue polypeptide: 2-isopropylmalate synthase (515 aa).

Positions 4–264 (VKIFDTTLRD…NIGINQDTTQ (261 aa)) constitute a Pyruvate carboxyltransferase domain. Positions 13, 201, 203, and 237 each coordinate Mn(2+). The regulatory domain stretch occupies residues 390 to 515 (ELDYLSVNTG…RQTTSAQEGI (126 aa)).

The protein belongs to the alpha-IPM synthase/homocitrate synthase family. LeuA type 1 subfamily. As to quaternary structure, homodimer. It depends on Mn(2+) as a cofactor.

Its subcellular location is the cytoplasm. It catalyses the reaction 3-methyl-2-oxobutanoate + acetyl-CoA + H2O = (2S)-2-isopropylmalate + CoA + H(+). The protein operates within amino-acid biosynthesis; L-leucine biosynthesis; L-leucine from 3-methyl-2-oxobutanoate: step 1/4. Its function is as follows. Catalyzes the condensation of the acetyl group of acetyl-CoA with 3-methyl-2-oxobutanoate (2-ketoisovalerate) to form 3-carboxy-3-hydroxy-4-methylpentanoate (2-isopropylmalate). This Halothermothrix orenii (strain H 168 / OCM 544 / DSM 9562) protein is 2-isopropylmalate synthase.